Reading from the N-terminus, the 410-residue chain is Inositol hexakisphosphate kinase 3 (410 aa).

211–219 (PCVLDLKMG) contacts substrate. Residues 333 to 358 (QEPPERAPGSPHPHEAPQAAHGSSPG) are disordered.

Belongs to the inositol phosphokinase (IPK) family. As to expression, detected in brain.

The protein localises to the cytoplasm. The enzyme catalyses 1D-myo-inositol hexakisphosphate + ATP = 5-diphospho-1D-myo-inositol 1,2,3,4,6-pentakisphosphate + ADP. It carries out the reaction 1-diphospho-1D-myo-inositol 2,3,4,5,6-pentakisphosphate + ATP + H(+) = 1,5-bis(diphospho)-1D-myo-inositol 2,3,4,6-tetrakisphosphate + ADP. Functionally, converts inositol hexakisphosphate (InsP6) to diphosphoinositol pentakisphosphate (InsP7/PP-InsP5). Converts 1,3,4,5,6-pentakisphosphate (InsP5) to PP-InsP4. The polypeptide is Inositol hexakisphosphate kinase 3 (IP6K3) (Homo sapiens (Human)).